We begin with the raw amino-acid sequence, 587 residues long: Aspartate--tRNA ligase (587 aa).

E173 contributes to the L-aspartate binding site. The segment at 197 to 200 is aspartate; the sequence is QTLK. R219 provides a ligand contact to L-aspartate. Residues 219 to 221 and Q228 contribute to the ATP site; that span reads RDE. Position 446 (H446) interacts with L-aspartate. E480 serves as a coordination point for ATP. R487 contributes to the L-aspartate binding site. 532–535 serves as a coordination point for ATP; the sequence is GLDR.

Belongs to the class-II aminoacyl-tRNA synthetase family. Type 1 subfamily. Homodimer.

It localises to the cytoplasm. The catalysed reaction is tRNA(Asp) + L-aspartate + ATP = L-aspartyl-tRNA(Asp) + AMP + diphosphate. Functionally, catalyzes the attachment of L-aspartate to tRNA(Asp) in a two-step reaction: L-aspartate is first activated by ATP to form Asp-AMP and then transferred to the acceptor end of tRNA(Asp). In Phocaeicola vulgatus (strain ATCC 8482 / DSM 1447 / JCM 5826 / CCUG 4940 / NBRC 14291 / NCTC 11154) (Bacteroides vulgatus), this protein is Aspartate--tRNA ligase.